An 866-amino-acid chain; its full sequence is Putative linoleate 9S-lipoxygenase 3 (866 aa).

In terms of domain architecture, PLAT spans 33 to 161; that stretch reads NDFGATVIDG…KYRYDRVFFA (129 aa). Residues 164-866 enclose the Lipoxygenase domain; the sequence is AYLPSQMPAA…AKGIPNSISI (703 aa). The segment at 206–250 is disordered; sequence YNDLGSPDSGNPRPILGGSPDTPYPRRGRTGRKPTTTDPDSESRL. Positions 521, 526, 712, 716, and 866 each coordinate Fe cation.

Belongs to the lipoxygenase family. Fe cation is required as a cofactor.

It catalyses the reaction (9Z,12Z)-octadecadienoate + O2 = (9S)-hydroperoxy-(10E,12Z)-octadecadienoate. The protein operates within lipid metabolism; oxylipin biosynthesis. Plant lipoxygenase may be involved in a number of diverse aspects of plant physiology including growth and development, pest resistance, and senescence or responses to wounding. Catalyzes the hydroperoxidation of lipids containing a cis,cis-1,4-pentadiene structure. The polypeptide is Putative linoleate 9S-lipoxygenase 3 (Oryza sativa subsp. japonica (Rice)).